A 635-amino-acid chain; its full sequence is Early transcription factor 70 kDa subunit (635 aa).

Positions 32-185 constitute a Helicase ATP-binding domain; that stretch reads RSIIDENKSV…SNIISLMSDE (154 aa). 45–52 provides a ligand contact to ATP; it reads HIMGSGKT. Positions 135–138 match the DEXH box motif; that stretch reads DEAH. The region spanning 326–505 is the Helicase C-terminal domain; the sequence is KFKYFIGKIT…TLPFDIKKLL (180 aa).

Belongs to the helicase family. VETF subfamily. Heterodimer of a 70 kDa and a 82 kDa subunit.

Its subcellular location is the virion. Acts with RNA polymerase to initiate transcription from early gene promoters. A DNA-dependent ATPase activity is associated with VETF. This chain is Early transcription factor 70 kDa subunit (VETFS), found in Erythrocebus patas (Red guenon).